The primary structure comprises 194 residues: GTP cyclohydrolase 1 (194 aa).

Zn(2+) contacts are provided by Cys-83, His-86, and Cys-155.

It belongs to the GTP cyclohydrolase I family. In terms of assembly, homomer.

It carries out the reaction GTP + H2O = 7,8-dihydroneopterin 3'-triphosphate + formate + H(+). It participates in cofactor biosynthesis; 7,8-dihydroneopterin triphosphate biosynthesis; 7,8-dihydroneopterin triphosphate from GTP: step 1/1. This chain is GTP cyclohydrolase 1, found in Streptococcus pyogenes serotype M49 (strain NZ131).